A 399-amino-acid chain; its full sequence is Elongation factor Tu (399 aa).

Residues 10-204 (KPHVNIGTIG…AVDASIPEPE (195 aa)) enclose the tr-type G domain. Residues 19 to 26 (GHVDHGKT) are G1. 19 to 26 (GHVDHGKT) contacts GTP. Threonine 26 contributes to the Mg(2+) binding site. The G2 stretch occupies residues 60–64 (GITIN). The tract at residues 81–84 (DCPG) is G3. GTP contacts are provided by residues 81–85 (DCPGH) and 136–139 (NKCD). A G4 region spans residues 136–139 (NKCD). The interval 174-176 (SGL) is G5.

Belongs to the TRAFAC class translation factor GTPase superfamily. Classic translation factor GTPase family. EF-Tu/EF-1A subfamily. In terms of assembly, monomer.

It is found in the cytoplasm. It catalyses the reaction GTP + H2O = GDP + phosphate + H(+). Its function is as follows. GTP hydrolase that promotes the GTP-dependent binding of aminoacyl-tRNA to the A-site of ribosomes during protein biosynthesis. The protein is Elongation factor Tu of Prochlorococcus marinus (strain MIT 9313).